The primary structure comprises 641 residues: MHAPQLRKPAAGEIPESPGVYRFWDAHDRVIYVGKAKNLRARLTSYFADPALLHPRTRAMVTAAARLDWVIVRTEVEALQLEYNWIKQYEPRFNIKYRDDKSYPYLAVTLAEPVPRLMVYRGKRKKGNRYFGPFAHAWAIRDTLDLLLRVFPARTCSAGVYRRAQRIGRPCLLGYIGKCSAPCVGWVSEEQHRQIVLDFCDVMGGRATEYLRRLEKDMRAAAAAEDFERAARLRDDAAALRLAIEKQTVVLPENTDADVIALADDDLEAAVHVFFVRDGRVRGQRGWVVEKVEALDTADLVQHFLAQLYGETGAESADVPREILVPVAPSDTETLERWLSSRRGGRVTIRVPQRGDKKALLETVAQNAAQALHLHKVRRAGDLTARGRALREIQEALNLPDAPLRIECYDVSTLQGTDVVASMVVFEDGLPRKSEYRRFALRGVGGGDVGAIHEVISRRFRRYLDERMQTDSPIDDGTGPDQPRVDAAAHHRKFSYPPSLVIVDGGAPQVAAAKKALDELGIDDVALAGLAKRLEEIWLPDREEPVILPRASEGLYLLQRLRDEAHRFAISYHRAKRSTSMTRSVLEGIPGIGETRRKAFLRHFGSVQRMRQATVAELAAVPGVGRRTAEVVFAALHGADQ.

One can recognise a GIY-YIG domain in the interval 16–95; sequence ESPGVYRFWD…IKQYEPRFNI (80 aa). Positions 208-243 constitute a UVR domain; the sequence is TEYLRRLEKDMRAAAAAEDFERAARLRDDAAALRLA.

It belongs to the UvrC family. In terms of assembly, interacts with UvrB in an incision complex.

The protein resides in the cytoplasm. Functionally, the UvrABC repair system catalyzes the recognition and processing of DNA lesions. UvrC both incises the 5' and 3' sides of the lesion. The N-terminal half is responsible for the 3' incision and the C-terminal half is responsible for the 5' incision. This chain is UvrABC system protein C, found in Acidothermus cellulolyticus (strain ATCC 43068 / DSM 8971 / 11B).